An 88-amino-acid chain; its full sequence is Small ribosomal subunit protein bS20 (88 aa).

A compositionally biased stretch (basic and acidic residues) spans 1–17 (MANIKSNEKRLRQDIKR). Residues 1–25 (MANIKSNEKRLRQDIKRNLNNKGQK) are disordered.

This sequence belongs to the bacterial ribosomal protein bS20 family.

Its function is as follows. Binds directly to 16S ribosomal RNA. In Mycoplasma genitalium (strain ATCC 33530 / DSM 19775 / NCTC 10195 / G37) (Mycoplasmoides genitalium), this protein is Small ribosomal subunit protein bS20.